We begin with the raw amino-acid sequence, 25 residues long: Css54 (25 aa).

As to expression, expressed by the venom gland.

It is found in the secreted. Its subcellular location is the target cell membrane. Functionally, amphipathic peptide that shows antibacterial activity against E.coli (MIC=12.5 ug/ml) and S.aureus (MIC=12.5 ug/ml). Has hemolytic activity against human erythrocytes (25 uM provokes 83% of hemolysis). May act by disrupting the integrity of the bacterial cell membrane. Increases efficacy of antibiotics (ethambutol, pyrazinamide, isoniazid, rifampicin) when tested against S.aureus, probably by facilitating their incorporation into the bacteria. This chain is Css54, found in Centruroides suffusus (Durango bark scorpion).